A 391-amino-acid chain; its full sequence is Paired box protein Pax-5 (391 aa).

A disordered region spans residues 1–21 (MDLEKNYPTPRTSRTGHGGVN). Positions 16–142 (GHGGVNQLGG…SSINRIIRTK (127 aa)) form a DNA-binding region, paired. Residues 19-75 (GVNQLGGVFVNGRPLPDVVRQRIVELAHQGVRPCDISRQLRVSHGCVSKILGRYYET) are PAI subdomain. The interval 94-142 (KVVEKIAEYKRQNPTMFAWEIRDRLLAERVCDNDTVPSVSSINRIIRTK) is RED subdomain. The tract at residues 182-218 (SGILGITSPSADTNKRKRDEGIQESPVPNGHSLPGRD) is disordered.

As to quaternary structure, interacts with ETS1; this interaction alters PAX5 DNA-binding properties. Binds DNA as a monomer. Interacts with TBP; this interaction allows PAX5 to interact with the basal transcription machinery. Interacts with RB1. Interacts with TLE4. Interacts with DAXX. (Microbial infection) Interacts (via N-terminus) with Epstein-Barr virus protein BZLF1 (via C-terminus); this interaction inhibits BZLF1-mediated lytic viral reactivation. Interacts also with EBNA1; this interaction promotes EBNA1-dependent transcription. Post-translationally, O-glycosylated. Phosphorylated by SYK. This phosphorylation plays an important role in the abolition of BLIMP1 repression by PAX5 in order to trigger plasma cell differentiation.

It localises to the nucleus. Its function is as follows. Transcription factor that plays an essential role in commitment of lymphoid progenitors to the B-lymphocyte lineage. Fulfills a dual role by repressing B-lineage inappropriate genes and simultaneously activating B-lineage-specific genes. In turn, regulates cell adhesion and migration, induces V(H)-to-D(H)J(H) recombination, facilitates pre-B-cell receptor signaling and promotes development to the mature B-cell stage. Repression of the cohesin-release factor WAPL causes global changes of the chromosomal architecture in pro-B cells to facilitate the generation of a diverse antibody repertoire. (Microbial infection) Plays an essential role in the maintenance of Epstein-Barr virus genome copy number within the host cell by promoting EBNA1/oriP-dependent binding and transcription. Also participates in the inhibition of lytic EBV reactivation by modulating viral BZLF1 activity. This chain is Paired box protein Pax-5 (PAX5), found in Homo sapiens (Human).